We begin with the raw amino-acid sequence, 186 residues long: TATA-box-binding protein 2 (186 aa).

A run of 2 repeats spans residues 10–86 (IQNV…FDKL) and 101–179 (VQNI…VERI). Glycyl lysine isopeptide (Lys-Gly) (interchain with G-Cter in SAMP2) cross-links involve residues K53 and K63.

It belongs to the TBP family.

Functionally, general factor that plays a role in the activation of archaeal genes transcribed by RNA polymerase. Binds specifically to the TATA box promoter element which lies close to the position of transcription initiation. This is TATA-box-binding protein 2 (tbp2) from Haloferax volcanii (strain ATCC 29605 / DSM 3757 / JCM 8879 / NBRC 14742 / NCIMB 2012 / VKM B-1768 / DS2) (Halobacterium volcanii).